The following is a 208-amino-acid chain: Small ribosomal subunit protein uS4 (208 aa).

The tract at residues 31–50 (SALDKRAYGPGQHGQRRTKT) is disordered. Residues 98–161 (RRLDNVVYRM…KSNPQVVRAM (64 aa)) form the S4 RNA-binding domain.

Belongs to the universal ribosomal protein uS4 family. As to quaternary structure, part of the 30S ribosomal subunit. Contacts protein S5. The interaction surface between S4 and S5 is involved in control of translational fidelity.

Its function is as follows. One of the primary rRNA binding proteins, it binds directly to 16S rRNA where it nucleates assembly of the body of the 30S subunit. Functionally, with S5 and S12 plays an important role in translational accuracy. The protein is Small ribosomal subunit protein uS4 of Helicobacter pylori (strain J99 / ATCC 700824) (Campylobacter pylori J99).